Reading from the N-terminus, the 560-residue chain is Triacylglyceride transporter MSMEG_3069/MSMEI_2992 (560 aa).

14 helical membrane passes run 16–36 (LAVL…VDIM), 48–68 (QVTP…PLLG), 78–98 (MLIQ…ALSS), 108–128 (IIQG…AADL), 143–163 (AAQE…VWLF), 168–188 (AVFW…HFSL), 200–220 (VDVI…VGLY), 229–249 (VLPS…VAFF), 269–289 (PFLA…VTLV), 307–327 (AFLL…GGWL), 336–356 (VVLI…HWSV), 368–388 (FTLP…GLVI), 411–431 (VVVA…AWGF), and 477–497 (IFLS…LISG). Residues 362 to 371 (RHNLGLFTLP) form a beta-hairpin region. The tract at residues 519-560 (IDPYDAGDADDAPTEMLDLPTQVLSAPPSDPGDERPGRHRAP) is disordered.

Belongs to the major facilitator superfamily. P55 (TC 2.A.1.3.34) family.

It is found in the cell inner membrane. Resistance to ethidium bromide is inhibited by reserpine. In association with lipoprotein LprG transports triacyglycerides (TAG) across the inner cell membrane into the periplasm; TAG probably regulates lipid metabolism and growth regulation and plays a structural role in the outer membrane. TAG (and maybe other lipids) enters the central cavity of the P55 transporter from within the cell inner membrane via clefts on the cytoplasmic face of P55 between TM5-TM8 and TM2-TM11. From there the lipid is probably transferred to the hydrophobic cavity of LprG. Confers resistance to ethidium bromide, possibly acting as an efflux pump, requires LprG lipoprotein for normal function. Export of ethidium bromide can be complemented by the equivalent operon from M.tuberculosis (lprG-Rv1410c). Involved in drug susceptibilty, its expression alone partially complements the antibiotic susceptibilty of a double lprG-mfs deletion. Probably does not function as a bona fide drug efflux pump, but instead plays a role in outer membrane biogenesis. Probably required with LprG for normal surface localization of lipoarabinomannan (LAM). The polypeptide is Triacylglyceride transporter MSMEG_3069/MSMEI_2992 (Mycolicibacterium smegmatis (strain ATCC 700084 / mc(2)155) (Mycobacterium smegmatis)).